The chain runs to 269 residues: Phosphonates import ATP-binding protein PhnC (269 aa).

The ABC transporter domain maps to 8–251; the sequence is IHLYGASLRH…LLDALYANEQ (244 aa). ATP is bound at residue 40 to 47; it reads GPSGAGKS.

It belongs to the ABC transporter superfamily. Phosphonates importer (TC 3.A.1.9.1) family. In terms of assembly, the complex is composed of two ATP-binding proteins (PhnC), two transmembrane proteins (PhnE) and a solute-binding protein (PhnD).

Its subcellular location is the cell inner membrane. The enzyme catalyses phosphonate(out) + ATP + H2O = phosphonate(in) + ADP + phosphate + H(+). Functionally, part of the ABC transporter complex PhnCDE involved in phosphonates import. Responsible for energy coupling to the transport system. In Pseudomonas putida (strain ATCC 47054 / DSM 6125 / CFBP 8728 / NCIMB 11950 / KT2440), this protein is Phosphonates import ATP-binding protein PhnC.